A 499-amino-acid chain; its full sequence is Lysine--tRNA ligase (499 aa).

Residues glutamate 408 and glutamate 415 each contribute to the Mg(2+) site.

Belongs to the class-II aminoacyl-tRNA synthetase family. In terms of assembly, homodimer. It depends on Mg(2+) as a cofactor.

It localises to the cytoplasm. It catalyses the reaction tRNA(Lys) + L-lysine + ATP = L-lysyl-tRNA(Lys) + AMP + diphosphate. This is Lysine--tRNA ligase from Bacillus cytotoxicus (strain DSM 22905 / CIP 110041 / 391-98 / NVH 391-98).